The sequence spans 398 residues: Cysteine desulfurase (398 aa).

Pyridoxal 5'-phosphate-binding positions include 74–75 (GT), Asn-155, Gln-182, and 202–204 (CGH). An N6-(pyridoxal phosphate)lysine modification is found at Lys-205. A compositionally biased stretch (basic and acidic residues) spans 230–244 (GHQERSRRAGNGERA). The tract at residues 230-253 (GHQERSRRAGNGERAGHRRAGGGA) is disordered. The active-site Cysteine persulfide intermediate is Cys-327. Residue Cys-327 coordinates [2Fe-2S] cluster.

Belongs to the class-V pyridoxal-phosphate-dependent aminotransferase family. NifS/IscS subfamily. Homodimer. Pyridoxal 5'-phosphate is required as a cofactor.

The enzyme catalyses (sulfur carrier)-H + L-cysteine = (sulfur carrier)-SH + L-alanine. Its function is as follows. Catalyzes the removal of elemental sulfur atoms from cysteine to produce alanine. Seems to participate in the biosynthesis of the nitrogenase metalloclusters by providing the inorganic sulfur required for the Fe-S core formation. The polypeptide is Cysteine desulfurase (Azospirillum brasilense).